We begin with the raw amino-acid sequence, 637 residues long: Nuclear receptor subfamily 2 group C member 1-A (637 aa).

The nuclear receptor DNA-binding region spans 149–224 (VELCVVCGDK…LGMKQDSVQC (76 aa)). NR C4-type zinc fingers lie at residues 152–172 (CVVC…CEGC) and 188–207 (CRGS…CQYC). Residues 383–624 (CLGSNANLLH…SIIPYILRME (242 aa)) enclose the NR LBD domain.

Belongs to the nuclear hormone receptor family. NR2 subfamily.

The protein localises to the nucleus. Its function is as follows. Orphan nuclear receptor. Binds the IR7 element in the promoter of its own gene in an autoregulatory negative feedback mechanism. Primarily repressor of a broad range of genes. Binds to hormone response elements (HREs) consisting of two 5'-AGGTCA-3' half site direct repeat consensus sequences. This is Nuclear receptor subfamily 2 group C member 1-A (nr2c1-a) from Xenopus laevis (African clawed frog).